Reading from the N-terminus, the 475-residue chain is Ribulose bisphosphate carboxylase large chain (475 aa).

Residues 1 to 2 constitute a propeptide that is removed on maturation; the sequence is MS. P3 carries the N-acetylproline modification. Residue K14 is modified to N6,N6,N6-trimethyllysine. The substrate site is built by N123 and T173. The active-site Proton acceptor is K175. K177 contributes to the substrate binding site. Positions 201, 203, and 204 each coordinate Mg(2+). The residue at position 201 (K201) is an N6-carboxylysine. Catalysis depends on H294, which acts as the Proton acceptor. Substrate contacts are provided by R295, H327, and S379.

Belongs to the RuBisCO large chain family. Type I subfamily. As to quaternary structure, heterohexadecamer of 8 large chains and 8 small chains; disulfide-linked. The disulfide link is formed within the large subunit homodimers. It depends on Mg(2+) as a cofactor. Post-translationally, the disulfide bond which can form in the large chain dimeric partners within the hexadecamer appears to be associated with oxidative stress and protein turnover.

The protein resides in the plastid. It is found in the chloroplast. The catalysed reaction is 2 (2R)-3-phosphoglycerate + 2 H(+) = D-ribulose 1,5-bisphosphate + CO2 + H2O. It catalyses the reaction D-ribulose 1,5-bisphosphate + O2 = 2-phosphoglycolate + (2R)-3-phosphoglycerate + 2 H(+). In terms of biological role, ruBisCO catalyzes two reactions: the carboxylation of D-ribulose 1,5-bisphosphate, the primary event in carbon dioxide fixation, as well as the oxidative fragmentation of the pentose substrate in the photorespiration process. Both reactions occur simultaneously and in competition at the same active site. This chain is Ribulose bisphosphate carboxylase large chain, found in Viscum album (European mistletoe).